Consider the following 276-residue polypeptide: MRGTVSVPKKAEDAKADPPAKKKADTQASSHTLLEGRLGYQLESALLVRALTHRSYAYENGGLPTNERLEFLGDSVLGLVVTDTLYRTHPDLPEGQLAKLRAAVVNSRALAEVGRGLELGSFIRLGRGEEGTGGRDKASILADTLEAVIGAVYLDQGLDAASELVHRLFDPLIEKSSNLGAGLDWKTSLQELTATEGLGVPEYLVTETGPDHEKTFTAAARVGGVSYGTGTGRSKKEAEQQAAESAWRSIRAAADERAKATADAVDADPDEASASA.

The disordered stretch occupies residues 1–29; it reads MRGTVSVPKKAEDAKADPPAKKKADTQAS. The span at 9-25 shows a compositional bias: basic and acidic residues; the sequence is KKAEDAKADPPAKKKAD. Residues 31–157 form the RNase III domain; the sequence is HTLLEGRLGY…VIGAVYLDQG (127 aa). Position 70 (Glu70) interacts with Mg(2+). Residue Asp74 is part of the active site. Residues Asp143 and Glu146 each coordinate Mg(2+). Residue Glu146 is part of the active site. One can recognise a DRBM domain in the interval 184 to 252; that stretch reads DWKTSLQELT…AESAWRSIRA (69 aa). The disordered stretch occupies residues 227 to 276; the sequence is YGTGTGRSKKEAEQQAAESAWRSIRAAADERAKATADAVDADPDEASASA. Acidic residues predominate over residues 265 to 276; sequence VDADPDEASASA.

This sequence belongs to the ribonuclease III family. Homodimer. Mg(2+) serves as cofactor.

Its subcellular location is the cytoplasm. It carries out the reaction Endonucleolytic cleavage to 5'-phosphomonoester.. Digests double-stranded RNA. Involved in the processing of primary rRNA transcript to yield the immediate precursors to the large and small rRNAs (23S and 16S). Also processes some mRNAs, and tRNAs when they are encoded in the rRNA operon. May modulate key aspects of gene expression as its absence has extensive effects on the abundance of about 200 different transcripts. Probably processes pre-crRNA and tracrRNA of type II CRISPR loci if present in the organism. This is Ribonuclease 3 (rnc) from Streptomyces coelicolor (strain ATCC BAA-471 / A3(2) / M145).